A 174-amino-acid polypeptide reads, in one-letter code: Larval cuticle protein LCP-22 (174 aa).

The N-terminal stretch at 1-16 (MKFAVVFACMVAAVAA) is a signal peptide. The 72-residue stretch at 82–153 (DGSYTYFYET…PTGNAIPTSP (72 aa)) folds into the Chitin-binding type R&amp;R domain.

In terms of biological role, component of the cuticle of the larva of Bombyx mori. The sequence is that of Larval cuticle protein LCP-22 (LCP22) from Bombyx mori (Silk moth).